A 294-amino-acid polypeptide reads, in one-letter code: Aspartate carbamoyltransferase catalytic subunit (294 aa).

Residues Arg49 and Thr50 each coordinate carbamoyl phosphate. L-aspartate is bound at residue Lys77. Arg99, His127, and Gln130 together coordinate carbamoyl phosphate. L-aspartate contacts are provided by Arg161 and Arg211. Residues Gly250 and Pro251 each coordinate carbamoyl phosphate.

It belongs to the aspartate/ornithine carbamoyltransferase superfamily. ATCase family. Heterododecamer (2C3:3R2) of six catalytic PyrB chains organized as two trimers (C3), and six regulatory PyrI chains organized as three dimers (R2).

The enzyme catalyses carbamoyl phosphate + L-aspartate = N-carbamoyl-L-aspartate + phosphate + H(+). It functions in the pathway pyrimidine metabolism; UMP biosynthesis via de novo pathway; (S)-dihydroorotate from bicarbonate: step 2/3. In terms of biological role, catalyzes the condensation of carbamoyl phosphate and aspartate to form carbamoyl aspartate and inorganic phosphate, the committed step in the de novo pyrimidine nucleotide biosynthesis pathway. The polypeptide is Aspartate carbamoyltransferase catalytic subunit (Sulfurovum sp. (strain NBC37-1)).